We begin with the raw amino-acid sequence, 277 residues long: Myelin proteolipid protein (277 aa).

The Cytoplasmic portion of the chain corresponds to 1 to 10 (MGLLECCARC). 3 S-palmitoyl cysteine lipidation sites follow: C6, C7, and C10. A helical membrane pass occupies residues 11-36 (LVGAPFASLVATGLCFFGVALFCGCG). The Extracellular portion of the chain corresponds to 37-59 (HEALTGTEKLIETYFSKNYQDYE). Residues 60-88 (YLINVIHAFQYVIYGTASFFFLYGALLLA) form a helical membrane-spanning segment. The Cytoplasmic segment spans residues 89–151 (EGFYTTGAVR…LGKWLGHPDK (63 aa)). A lipid anchor (S-palmitoyl cysteine) is attached at C109. S114 is subject to Phosphoserine. 2 positions are modified to phosphothreonine: T116 and T118. S-palmitoyl cysteine attachment occurs at residues C139 and C141. Residues 152 to 178 (FVGITYALTIVWLLVFACSAVPVYIYF) form a helical membrane-spanning segment. Residues 179 to 238 (NTWTTCQSIAFPSKTSASIGSLCADARMYGVLPWNAFPGKVCGSNLLSICKTAEFQMTFH) lie on the Extracellular side of the membrane. Intrachain disulfides connect C184/C228 and C201/C220. A lipid anchor (O-palmitoyl serine) is attached at S199. Residues 239–268 (LFIAAFVGAAATLVSLLTFMIAATYNFAVL) traverse the membrane as a helical segment. Residues 269-277 (KLMGRGTKF) are Cytoplasmic-facing.

It belongs to the myelin proteolipid protein family.

The protein localises to the cell membrane. Its subcellular location is the myelin membrane. In terms of biological role, this is the major myelin protein from the central nervous system. It plays an important role in the formation or maintenance of the multilamellar structure of myelin. This chain is Myelin proteolipid protein (PLP1), found in Canis lupus familiaris (Dog).